We begin with the raw amino-acid sequence, 256 residues long: Thiazole synthase (256 aa).

Residue lysine 96 is the Schiff-base intermediate with DXP of the active site. Residues glycine 157, 183–184 (AG), and 205–206 (NT) contribute to the 1-deoxy-D-xylulose 5-phosphate site.

This sequence belongs to the ThiG family. Homotetramer. Forms heterodimers with either ThiH or ThiS.

The protein localises to the cytoplasm. The enzyme catalyses [ThiS sulfur-carrier protein]-C-terminal-Gly-aminoethanethioate + 2-iminoacetate + 1-deoxy-D-xylulose 5-phosphate = [ThiS sulfur-carrier protein]-C-terminal Gly-Gly + 2-[(2R,5Z)-2-carboxy-4-methylthiazol-5(2H)-ylidene]ethyl phosphate + 2 H2O + H(+). It functions in the pathway cofactor biosynthesis; thiamine diphosphate biosynthesis. Its function is as follows. Catalyzes the rearrangement of 1-deoxy-D-xylulose 5-phosphate (DXP) to produce the thiazole phosphate moiety of thiamine. Sulfur is provided by the thiocarboxylate moiety of the carrier protein ThiS. In vitro, sulfur can be provided by H(2)S. This is Thiazole synthase from Bacillus cereus (strain G9842).